The primary structure comprises 326 residues: tRNA-modifying protein YgfZ (326 aa).

Positions 27 and 189 each coordinate folate.

The protein belongs to the tRNA-modifying YgfZ family.

It is found in the cytoplasm. Functionally, folate-binding protein involved in regulating the level of ATP-DnaA and in the modification of some tRNAs. It is probably a key factor in regulatory networks that act via tRNA modification, such as initiation of chromosomal replication. This chain is tRNA-modifying protein YgfZ, found in Escherichia coli O7:K1 (strain IAI39 / ExPEC).